We begin with the raw amino-acid sequence, 566 residues long: Amino acid transporter 6-1 (566 aa).

11 helical membrane passes run 65–85, 137–157, 158–178, 187–207, 216–236, 250–270, 334–354, 367–387, 392–412, 423–443, and 455–475; these read YVLLLLYSIVVFTTGAVFYGW, MTFAVACLMSAGAGTLLDWLG, PLWTELLGQLLNLVGWLFLAF, YPALVFIGLGADASMLPTLCI, GLIITILGSAASASFGIPLVL, VSIGYCFFGPVLGVLVALLFM, FFSIRYFLIVLYFVVVSWATS, DVVSVIEVLLPLSFIPCILLG, VVGIIRVLFVMNTSGLLTYVF, LSACCFMVYMSLLTSQVYVYV, and LIGISNLTGGLLSLVSNPLYE. Asn-476 carries an N-linked (GlcNAc...) asparagine glycan. A helical membrane pass occupies residues 489–509; sequence IQIAMTALLCVQYVWIFILGF.

This sequence belongs to the SLC43A transporter (TC 2.A.1.44) family.

It localises to the cell membrane. The enzyme catalyses L-lysine(in) = L-lysine(out). The catalysed reaction is L-arginine(in) = L-arginine(out). It carries out the reaction L-methionine(in) = L-methionine(out). It catalyses the reaction L-leucine(in) = L-leucine(out). In terms of biological role, cationic and neutral amino acid transporter. Transports lysine with high affinity. Can transport arginine, methionine and leucine. Does not require inorganic ions, such as sodium, chloride, potassium, calcium or magnesium, for transport activity. This is Amino acid transporter 6-1 from Toxoplasma gondii (strain ATCC 50611 / Me49).